The primary structure comprises 538 residues: Acetylcholine receptor subunit alpha-type acr-7 (538 aa).

The N-terminal stretch at Met1–Gly27 is a signal peptide. The Extracellular portion of the chain corresponds to Ser28–Tyr250. N-linked (GlcNAc...) asparagine glycans are attached at residues Asn41 and Asn101. Cystine bridges form between Cys160–Cys174 and Cys229–Cys230. The next 3 membrane-spanning stretches (helical) occupy residues Val251–Leu271, Ile280–Met300, and Val313–Leu333. Residues Asn334–Cys513 lie on the Cytoplasmic side of the membrane. A helical membrane pass occupies residues Leu514 to Ile534.

Belongs to the ligand-gated ion channel (TC 1.A.9) family. Acetylcholine receptor (TC 1.A.9.1) subfamily. As to quaternary structure, forms a homooligomeric channel blocked by alpha-bungarotoxin. The structure is probably pentameric.

Its subcellular location is the postsynaptic cell membrane. It localises to the cell membrane. In terms of biological role, after binding acetylcholine, the AChR responds by an extensive change in conformation that affects all subunits and leads to opening of an ion-conducting channel across the plasma membrane. This Caenorhabditis elegans protein is Acetylcholine receptor subunit alpha-type acr-7 (acr-7).